The following is a 157-amino-acid chain: Ribosome maturation factor RimP (157 aa).

This sequence belongs to the RimP family.

The protein resides in the cytoplasm. Its function is as follows. Required for maturation of 30S ribosomal subunits. This Bacillus licheniformis (strain ATCC 14580 / DSM 13 / JCM 2505 / CCUG 7422 / NBRC 12200 / NCIMB 9375 / NCTC 10341 / NRRL NRS-1264 / Gibson 46) protein is Ribosome maturation factor RimP.